The following is a 135-amino-acid chain: Peptidyl-prolyl cis-trans isomerase FPR2 (135 aa).

The signal sequence occupies residues 1-17 (MMFNIYLFVTFFSTILA). The PPIase FKBP-type domain occupies 43–132 (GDKVKVHYTG…VFDVELVDVK (90 aa)).

Belongs to the FKBP-type PPIase family. FKBP2 subfamily.

The protein localises to the endoplasmic reticulum membrane. It carries out the reaction [protein]-peptidylproline (omega=180) = [protein]-peptidylproline (omega=0). Inhibited by both FK506 and rapamycin. Binds FK506 with 15-fold lower affinity than FKB1. In terms of biological role, PPIases accelerate the folding of proteins. It catalyzes the cis-trans isomerization of proline imidic peptide bonds in oligopeptides. FKBP-13 may play a role in protein trafficking in the ER. The protein is Peptidyl-prolyl cis-trans isomerase FPR2 (FPR2) of Saccharomyces cerevisiae (strain ATCC 204508 / S288c) (Baker's yeast).